The chain runs to 229 residues: MSQRIKTAAVDIVHITSGRIASGMLSHEPIWYRAMAANMPTTVYQHKPHFEKLARIAQRESEKLNEFIKTRSKPVRVRTRHLYEPVHLKFMEDEIREIFYKQHPWELARPKLIVENSGDDHVTQDWSKMYQANKKLDGESVVQRTIYLLGEKKTHDQKALLEAYDKARFEFYKLRMAEDVQNVTAAEEADMFGACFSTSSVERNLFHEQKRIEDWKEKAVEMTLDMGAK.

This sequence belongs to the mitochondrion-specific ribosomal protein mS23 family. As to quaternary structure, component of the mitochondrial small ribosomal subunit.

The protein resides in the mitochondrion. The polypeptide is Small ribosomal subunit protein mS23 (RSM25) (Yarrowia lipolytica (strain CLIB 122 / E 150) (Yeast)).